We begin with the raw amino-acid sequence, 213 residues long: Uridine kinase (213 aa).

Position 15–22 (glycine 15–serine 22) interacts with ATP.

It belongs to the uridine kinase family.

It is found in the cytoplasm. The enzyme catalyses uridine + ATP = UMP + ADP + H(+). It catalyses the reaction cytidine + ATP = CMP + ADP + H(+). The protein operates within pyrimidine metabolism; CTP biosynthesis via salvage pathway; CTP from cytidine: step 1/3. It participates in pyrimidine metabolism; UMP biosynthesis via salvage pathway; UMP from uridine: step 1/1. The protein is Uridine kinase of Pectobacterium carotovorum subsp. carotovorum (strain PC1).